A 294-amino-acid chain; its full sequence is Ribosomal RNA small subunit methyltransferase H (294 aa).

Residues 31–33 (GGY), D49, F76, D97, and Q104 each bind S-adenosyl-L-methionine.

It belongs to the methyltransferase superfamily. RsmH family.

The protein resides in the cytoplasm. The enzyme catalyses cytidine(1402) in 16S rRNA + S-adenosyl-L-methionine = N(4)-methylcytidine(1402) in 16S rRNA + S-adenosyl-L-homocysteine + H(+). In terms of biological role, specifically methylates the N4 position of cytidine in position 1402 (C1402) of 16S rRNA. The polypeptide is Ribosomal RNA small subunit methyltransferase H (Wolbachia pipientis subsp. Culex pipiens (strain wPip)).